The sequence spans 169 residues: Probable inosine/xanthosine triphosphatase (169 aa).

7-12 is a substrate binding site; it reads STNKAK. Glu35 contributes to the Mg(2+) binding site.

This sequence belongs to the YjjX NTPase family. As to quaternary structure, homodimer. It depends on Mg(2+) as a cofactor. Requires Mn(2+) as cofactor.

The catalysed reaction is XTP + H2O = XDP + phosphate + H(+). It carries out the reaction ITP + H2O = IDP + phosphate + H(+). In terms of biological role, phosphatase that hydrolyzes non-canonical purine nucleotides such as XTP and ITP to their respective diphosphate derivatives. Probably excludes non-canonical purines from DNA/RNA precursor pool, thus preventing their incorporation into DNA/RNA and avoiding chromosomal lesions. The protein is Probable inosine/xanthosine triphosphatase of Sulfurisphaera tokodaii (strain DSM 16993 / JCM 10545 / NBRC 100140 / 7) (Sulfolobus tokodaii).